Consider the following 271-residue polypeptide: GPN-loop GTPase 3 (271 aa).

Glycine 13–threonine 18 is a GTP binding site. The short motif at glycine 70–asparagine 72 is the Gly-Pro-Asn (GPN)-loop; involved in dimer interface element. Serine 173–aspartate 176 is a binding site for GTP.

This sequence belongs to the GPN-loop GTPase family. As to quaternary structure, heterodimers with GPN1 or GPN2. Binds to RNA polymerase II (RNAPII).

Its function is as follows. Small GTPase required for proper nuclear import of RNA polymerase II and III (RNAPII and RNAPIII). May act at an RNAP assembly step prior to nuclear import. The sequence is that of GPN-loop GTPase 3 from Yarrowia lipolytica (strain CLIB 122 / E 150) (Yeast).